The primary structure comprises 246 residues: Exosome complex component Rrp41 (246 aa).

Belongs to the RNase PH family. Rrp41 subfamily. As to quaternary structure, component of the archaeal exosome complex. Forms a hexameric ring-like arrangement composed of 3 Rrp41-Rrp42 heterodimers. The hexameric ring associates with a trimer of Rrp4 and/or Csl4 subunits.

Its subcellular location is the cytoplasm. Functionally, catalytic component of the exosome, which is a complex involved in RNA degradation. Has 3'-&gt;5' exoribonuclease activity. Can also synthesize heteromeric RNA-tails. This Pyrobaculum neutrophilum (strain DSM 2338 / JCM 9278 / NBRC 100436 / V24Sta) (Thermoproteus neutrophilus) protein is Exosome complex component Rrp41.